Reading from the N-terminus, the 699-residue chain is Polyribonucleotide nucleotidyltransferase (699 aa).

Mg(2+)-binding residues include D488 and D494. The region spanning 555-614 (PRIYSIKVNPDKIKDVIGKGGSVIRSLTEETNTIIDIEDNGIIKIVALDYDKAKQAIRRI) is the KH domain. Positions 624–692 (GAVYTGKVSH…RQGRIRLSMK (69 aa)) constitute an S1 motif domain.

Belongs to the polyribonucleotide nucleotidyltransferase family. Component of the RNA degradosome, which is a multiprotein complex involved in RNA processing and mRNA degradation. Requires Mg(2+) as cofactor.

Its subcellular location is the cytoplasm. It catalyses the reaction RNA(n+1) + phosphate = RNA(n) + a ribonucleoside 5'-diphosphate. Involved in mRNA degradation. Catalyzes the phosphorolysis of single-stranded polyribonucleotides processively in the 3'- to 5'-direction. This chain is Polyribonucleotide nucleotidyltransferase, found in Blochmanniella pennsylvanica (strain BPEN).